The sequence spans 119 residues: MAAEEGQVIGCHTNDVWTVQLDKAKESNKLIVIDFTASWCPPCRMIAPIFNDLAKKFMSSAIFFKVDVDELQSVAKEFGVEAMPTFVFIKAGEVVDKLVGANKEDLQAKIVKHTGVTTA.

The region spanning 2-115 (AAEEGQVIGC…LQAKIVKHTG (114 aa)) is the Thioredoxin domain. Residues Cys40 and Cys43 each act as nucleophile in the active site. The cysteines at positions 40 and 43 are disulfide-linked.

This sequence belongs to the thioredoxin family. Plant H-type subfamily. Interacts with MDH1.

The protein localises to the cytoplasm. Thiol-disulfide oxidoreductase probably involved in the redox regulation of a number of cytosolic enzymes. Possesses insulin disulfide bonds reducing activity. The polypeptide is Thioredoxin H4 (TRX4) (Arabidopsis thaliana (Mouse-ear cress)).